We begin with the raw amino-acid sequence, 122 residues long: Large ribosomal subunit protein uL14 (122 aa).

It belongs to the universal ribosomal protein uL14 family. Part of the 50S ribosomal subunit. Forms a cluster with proteins L3 and L19. In the 70S ribosome, L14 and L19 interact and together make contacts with the 16S rRNA in bridges B5 and B8.

Functionally, binds to 23S rRNA. Forms part of two intersubunit bridges in the 70S ribosome. This Bdellovibrio bacteriovorus (strain ATCC 15356 / DSM 50701 / NCIMB 9529 / HD100) protein is Large ribosomal subunit protein uL14.